Consider the following 417-residue polypeptide: Type IV inositol polyphosphate 5-phosphatase 9 (417 aa).

2 catalytic regions span residues 258–273 and 339–354; these read DRVI…ISLP and KKRA…WYGN.

It belongs to the inositol polyphosphate 5-phosphatase family. As to expression, specifically expressed in roots.

The enzyme catalyses a 1,2-diacyl-sn-glycero-3-phospho-(1D-myo-inositol-4,5-bisphosphate) + H2O = a 1,2-diacyl-sn-glycero-3-phospho-(1D-myo-inositol 4-phosphate) + phosphate. It carries out the reaction a 1,2-diacyl-sn-glycero-3-phospho-(1D-myo-inositol-3,4,5-trisphosphate) + H2O = a 1,2-diacyl-sn-glycero-3-phospho-(1D-myo-inositol-3,4-bisphosphate) + phosphate. Functionally, has phosphatase activity toward PtdIns(4,5)P2 and at a lower extent toward PtdIns(3,4,5)P3 but not toward Ins(1,4,5)P3. Functions in salt stress response by regulating reactive oxygen species (ROS) production, endocytosis, Ca(2+) influx and stress-responsive genes expression. The sequence is that of Type IV inositol polyphosphate 5-phosphatase 9 from Arabidopsis thaliana (Mouse-ear cress).